The following is a 383-amino-acid chain: 8-amino-7-oxononanoate synthase (383 aa).

Residue Arg-21 participates in substrate binding. 108–109 contributes to the pyridoxal 5'-phosphate binding site; that stretch reads GF. Substrate is bound at residue His-133. Pyridoxal 5'-phosphate contacts are provided by Ser-179, His-207, and Thr-233. Lys-236 carries the N6-(pyridoxal phosphate)lysine modification. Residue Thr-350 participates in substrate binding.

The protein belongs to the class-II pyridoxal-phosphate-dependent aminotransferase family. BioF subfamily. Homodimer. Pyridoxal 5'-phosphate serves as cofactor.

The enzyme catalyses 6-carboxyhexanoyl-[ACP] + L-alanine + H(+) = (8S)-8-amino-7-oxononanoate + holo-[ACP] + CO2. Its pathway is cofactor biosynthesis; biotin biosynthesis. In terms of biological role, catalyzes the decarboxylative condensation of pimeloyl-[acyl-carrier protein] and L-alanine to produce 8-amino-7-oxononanoate (AON), [acyl-carrier protein], and carbon dioxide. The chain is 8-amino-7-oxononanoate synthase from Cronobacter sakazakii (strain ATCC BAA-894) (Enterobacter sakazakii).